The following is a 364-amino-acid chain: MANTIGKMFSVTSFGSSHGKAVGAVIDGCPANLELNTEDIQKELDKRKPGTSGVTTPRKEEDKVQILSGIFEGKTDGTPITGVVYNNNQHSKDYSMFKNTPRPSHGDYGWMSKYGNYDYNGGGRGSGRITIGHVIAGAIAKKLLKTKNIEIVSQVIQIGDIMAHSNDFDTVKENVEKNSVRCGDLEAAKAMEELILSKKQEGDSIGGIVETVAVGVPAGLGEPVFERLDGDLARILMNINAVKGVEIGFGFDVATSCASEINDEYYIEDNKIYTSTNSSGGIIGGISNGMPIISRIAVKPTPSISKCQKSVNLEKMEAEDITIQGRHDPCICPRATVVAQSSVAIVLADHMIRSGYIHPSNLEI.

Arg47 lines the NADP(+) pocket. Residues Arg124–Ser126, Asn240–Ala241, Gly284, Lys299–Ser303, and Arg326 contribute to the FMN site.

The protein belongs to the chorismate synthase family. The cofactor is FMNH2.

It carries out the reaction 5-O-(1-carboxyvinyl)-3-phosphoshikimate = chorismate + phosphate. It functions in the pathway metabolic intermediate biosynthesis; chorismate biosynthesis; chorismate from D-erythrose 4-phosphate and phosphoenolpyruvate: step 7/7. Catalyzes the anti-1,4-elimination of the C-3 phosphate and the C-6 proR hydrogen from 5-enolpyruvylshikimate-3-phosphate (EPSP) to yield chorismate, which is the branch point compound that serves as the starting substrate for the three terminal pathways of aromatic amino acid biosynthesis. This reaction introduces a second double bond into the aromatic ring system. The sequence is that of Chorismate synthase from Methanobrevibacter smithii (strain ATCC 35061 / DSM 861 / OCM 144 / PS).